Reading from the N-terminus, the 288-residue chain is Nucleotide-binding protein Neut_1559 (288 aa).

8-15 contacts ATP; the sequence is GLSGSGKS. Position 57–60 (57–60) interacts with GTP; it reads DMRS.

It belongs to the RapZ-like family.

Its function is as follows. Displays ATPase and GTPase activities. The sequence is that of Nucleotide-binding protein Neut_1559 from Nitrosomonas eutropha (strain DSM 101675 / C91 / Nm57).